Reading from the N-terminus, the 332-residue chain is MQEKLQAIVAQAKETIHSVSELVHLDEIRVQYLGKKGELTAMMKTLGQLSAEERPKAGQIINEAKQSVQTFLSEKKAELEDAILAAKLAGETIDVSLPGRGLDTGGLHPVTRTLRRIETIFSKAGFDVATGPEIEDDWHNFEALNIPETHPARAMHDTFYFDENTVLRTHTSGVQIRTMEEKDAPMRIIAPGRVYRCDSDQTHTPMFHQVEGLIIEENTSFAQLRTLIIEFLRQFFEDENLKVRFRPSYFPFTEPSAEVDIATNLFGDGRWIEVLGCGMVHPNVLKNVDVDSEKYTGLAFGLGVERLAMLRYGVTDLRQFFENDLRFLKQFK.

Glu-254 contacts Mg(2+).

The protein belongs to the class-II aminoacyl-tRNA synthetase family. Phe-tRNA synthetase alpha subunit type 1 subfamily. As to quaternary structure, tetramer of two alpha and two beta subunits. Mg(2+) is required as a cofactor.

The protein resides in the cytoplasm. It catalyses the reaction tRNA(Phe) + L-phenylalanine + ATP = L-phenylalanyl-tRNA(Phe) + AMP + diphosphate + H(+). The polypeptide is Phenylalanine--tRNA ligase alpha subunit (Hydrogenovibrio crunogenus (strain DSM 25203 / XCL-2) (Thiomicrospira crunogena)).